A 621-amino-acid polypeptide reads, in one-letter code: Phosphoenolpyruvate carboxykinase [GTP] (621 aa).

Residues Arg-82 and 220–222 (YGG) contribute to the substrate site. Residues Lys-229 and His-249 each coordinate Mn(2+). Ser-271 is a binding site for substrate. GTP is bound at residue 272 to 277 (QCGKTN). Residue Cys-273 is part of the active site. Asp-296 lines the Mn(2+) pocket. Substrate is bound at residue 386–388 (NSR). GTP is bound by residues Arg-388, Arg-419, and 514 to 517 (FGEN).

It belongs to the phosphoenolpyruvate carboxykinase [GTP] family. In terms of assembly, monomer. Mn(2+) is required as a cofactor.

The protein resides in the cytoplasm. The catalysed reaction is oxaloacetate + GTP = phosphoenolpyruvate + GDP + CO2. The protein operates within carbohydrate biosynthesis; gluconeogenesis. In terms of biological role, catalyzes the conversion of oxaloacetate (OAA) to phosphoenolpyruvate (PEP), the rate-limiting step in the metabolic pathway that produces glucose from lactate and other precursors derived from the citric acid cycle. This is Phosphoenolpyruvate carboxykinase [GTP] from Corynebacterium kroppenstedtii (strain DSM 44385 / JCM 11950 / CIP 105744 / CCUG 35717).